We begin with the raw amino-acid sequence, 177 residues long: ATP synthase subunit delta (177 aa).

It belongs to the ATPase delta chain family. As to quaternary structure, F-type ATPases have 2 components, F(1) - the catalytic core - and F(0) - the membrane proton channel. F(1) has five subunits: alpha(3), beta(3), gamma(1), delta(1), epsilon(1). F(0) has three main subunits: a(1), b(2) and c(10-14). The alpha and beta chains form an alternating ring which encloses part of the gamma chain. F(1) is attached to F(0) by a central stalk formed by the gamma and epsilon chains, while a peripheral stalk is formed by the delta and b chains.

The protein resides in the cell inner membrane. Its function is as follows. F(1)F(0) ATP synthase produces ATP from ADP in the presence of a proton or sodium gradient. F-type ATPases consist of two structural domains, F(1) containing the extramembraneous catalytic core and F(0) containing the membrane proton channel, linked together by a central stalk and a peripheral stalk. During catalysis, ATP synthesis in the catalytic domain of F(1) is coupled via a rotary mechanism of the central stalk subunits to proton translocation. In terms of biological role, this protein is part of the stalk that links CF(0) to CF(1). It either transmits conformational changes from CF(0) to CF(1) or is implicated in proton conduction. The sequence is that of ATP synthase subunit delta from Pseudoalteromonas translucida (strain TAC 125).